Consider the following 380-residue polypeptide: Chaperone protein DnaJ (380 aa).

One can recognise a J domain in the interval 5–69 (DFYEVLGVGR…QKKAAYDQYG (65 aa)). Residues 135 to 213 (GCSKEIRVPT…CHGQGRVEKT (79 aa)) form a CR-type zinc finger. Positions 148, 151, 165, 168, 187, 190, 201, and 204 each coordinate Zn(2+). 4 CXXCXGXG motif repeats span residues 148–155 (CDSCDGSG), 165–172 (CGTCHGQG), 187–194 (CPHCHGRG), and 201–208 (CNSCHGQG).

The protein belongs to the DnaJ family. As to quaternary structure, homodimer. The cofactor is Zn(2+).

The protein resides in the cytoplasm. Its function is as follows. Participates actively in the response to hyperosmotic and heat shock by preventing the aggregation of stress-denatured proteins and by disaggregating proteins, also in an autonomous, DnaK-independent fashion. Unfolded proteins bind initially to DnaJ; upon interaction with the DnaJ-bound protein, DnaK hydrolyzes its bound ATP, resulting in the formation of a stable complex. GrpE releases ADP from DnaK; ATP binding to DnaK triggers the release of the substrate protein, thus completing the reaction cycle. Several rounds of ATP-dependent interactions between DnaJ, DnaK and GrpE are required for fully efficient folding. Also involved, together with DnaK and GrpE, in the DNA replication of plasmids through activation of initiation proteins. The chain is Chaperone protein DnaJ from Photobacterium profundum (strain SS9).